Reading from the N-terminus, the 89-residue chain is Small ribosomal subunit protein uS15 (89 aa).

A compositionally biased stretch (basic and acidic residues) spans 1-10 (MSLDTTEKQE). Residues 1-23 (MSLDTTEKQELINAHQTHATDTG) are disordered. Residues 14-23 (AHQTHATDTG) show a composition bias toward polar residues.

Belongs to the universal ribosomal protein uS15 family. As to quaternary structure, part of the 30S ribosomal subunit. Forms a bridge to the 50S subunit in the 70S ribosome, contacting the 23S rRNA.

Functionally, one of the primary rRNA binding proteins, it binds directly to 16S rRNA where it helps nucleate assembly of the platform of the 30S subunit by binding and bridging several RNA helices of the 16S rRNA. In terms of biological role, forms an intersubunit bridge (bridge B4) with the 23S rRNA of the 50S subunit in the ribosome. The polypeptide is Small ribosomal subunit protein uS15 (Synechococcus sp. (strain WH7803)).